The following is a 248-amino-acid chain: Mitochondrial import inner membrane translocase subunit Tim21 (248 aa).

A mitochondrion-targeting transit peptide spans Met-1 to Ser-18. Positions Thr-67 to Ser-98 are disordered. Residues Phe-108 to Ile-128 traverse the membrane as a helical segment.

It belongs to the TIM21 family. As to quaternary structure, component of the TIM23 complex. Component of the MITRAC (mitochondrial translation regulation assembly intermediate of cytochrome c oxidase complex) complex, the core components of this complex being COA3/MITRAC12 and COX14. Interacts with COA3 and MT-CO1/COX1.

The protein localises to the mitochondrion membrane. Participates in the translocation of transit peptide-containing proteins across the mitochondrial inner membrane. Also required for assembly of mitochondrial respiratory chain complex I and complex IV as component of the MITRAC (mitochondrial translation regulation assembly intermediate of cytochrome c oxidase complex) complex. Probably shuttles between the presequence translocase and respiratory-chain assembly intermediates in a process that promotes incorporation of early nuclear-encoded subunits into these complexes. The sequence is that of Mitochondrial import inner membrane translocase subunit Tim21 (TIMM21) from Homo sapiens (Human).